A 908-amino-acid chain; its full sequence is Collagen alpha-2(I) chain (908 aa).

Low complexity predominate over residues 1–36; it reads GPMGIMGPRGPPGASGAPGPAGEPGEPGQTGPAGAR. Disordered regions lie at residues 1 to 211 and 227 to 908; these read GPMG…GITG and IPGP…PGPS. The segment covering 45 to 59 has biased composition (basic and acidic residues); sequence AGEDGHPGKPGRPGE. Low complexity-rich tracts occupy residues 129–158, 183–197, 234–249, 293–309, 403–418, 465–474, 526–542, and 569–589; these read VGAPGPAGARGSDGSVGPVGPAGPIGSAGP, AGPRGEVGIPGVSGP, PGPVGAAGATGARGIV, STGPTGPPGIRGSRGIP, AGIAGARGPAGPPGFQ, PAGPIGSRGP, RRGAPGAIGAPGPAGAN, and VGPAGPNGFAGPAGAAGQPGA. The segment covering 590–599 has biased composition (basic and acidic residues); it reads KGERGTKGPK. Residues 602 to 617 show a composition bias toward low complexity; that stretch reads NGPVGPTGPVGAAGPA. Over residues 627–636 the composition is skewed to gly residues; the sequence is GSRGDGGPPG. Composition is skewed to low complexity over residues 637-647, 701-730, 745-775, and 785-805; these read ATGFPGAAGRT, AGEPGTAGIPGTPGPQGIIGAPGIIGIPGS, EPGPIGIAGPPGARGPPGAVGNPGVNGAPGE, and PGPAGSVGPAGAVGPRGPSGP. Residues 809–820 are compositionally biased toward basic and acidic residues; it reads RGDKGEPGDKGP. The segment covering 893–908 has biased composition (pro residues); the sequence is AGPPGPPGPPGPPGPS.

This sequence belongs to the fibrillar collagen family. As to quaternary structure, trimers of one alpha 2(I) and two alpha 1(I) chains. Interacts (via C-terminus) with TMEM131 (via PapD-L domain); the interaction is direct and is involved in assembly and TRAPPIII ER-to-Golgi transport complex-dependent secretion of collagen. Post-translationally, prolines at the third position of the tripeptide repeating unit (G-X-Y) are hydroxylated in some or all of the chains. In terms of tissue distribution, forms the fibrils of tendon, ligaments and bones. In bones, the fibrils are mineralized with calcium hydroxyapatite.

The protein localises to the secreted. It localises to the extracellular space. The protein resides in the extracellular matrix. In terms of biological role, type I collagen is a member of group I collagen (fibrillar forming collagen). In Toxodon sp, this protein is Collagen alpha-2(I) chain.